The primary structure comprises 285 residues: Hydrolase in pqqF 5'region (285 aa).

In terms of domain architecture, CN hydrolase spans 22 to 258 (MRVALYQCPP…EALIIGTLDR (237 aa)). E60 functions as the Proton acceptor in the catalytic mechanism. K131 (proton donor) is an active-site residue. C165 acts as the Nucleophile in catalysis.

The protein belongs to the carbon-nitrogen hydrolase superfamily. NIT1/NIT2 family.

This Pseudomonas protegens (strain DSM 19095 / LMG 27888 / CFBP 6595 / CHA0) protein is Hydrolase in pqqF 5'region.